Here is a 291-residue protein sequence, read N- to C-terminus: Ribosome biogenesis protein BRX1 (291 aa).

Positions 31-232 (QRTLLISSRG…VILILEGSFG (202 aa)) constitute a Brix domain. At Ser285 the chain carries Phosphoserine.

This sequence belongs to the BRX1 family. Part of a complex that includes BRX1, RPF1, RPF2 and SSF1 or SSF2.

It localises to the nucleus. The protein resides in the nucleolus. Required for biogenesis of the 60S ribosomal subunit. The chain is Ribosome biogenesis protein BRX1 (BRX1) from Saccharomyces cerevisiae (strain ATCC 204508 / S288c) (Baker's yeast).